We begin with the raw amino-acid sequence, 316 residues long: Meiotically up-regulated gene 154 protein (316 aa).

The next 4 helical transmembrane spans lie at 41-61, 88-108, 159-179, and 186-206; these read YSIP…IYIK, AFLS…FIFS, FLLN…WFYS, and LLTF…SLLL. The segment at 291–316 is disordered; sequence HDSGISRDSSSPFKRFPHLSDGSSRF.

The protein localises to the endoplasmic reticulum membrane. Functionally, has a role in meiosis. The chain is Meiotically up-regulated gene 154 protein (mug154) from Schizosaccharomyces pombe (strain 972 / ATCC 24843) (Fission yeast).